A 550-amino-acid chain; its full sequence is Chaperonin GroEL (550 aa).

Residues T30–P33, K51, D87–T91, G415, N478–A480, and D494 each bind ATP.

Belongs to the chaperonin (HSP60) family. Forms a cylinder of 14 subunits composed of two heptameric rings stacked back-to-back. Interacts with the co-chaperonin GroES.

It is found in the cytoplasm. It catalyses the reaction ATP + H2O + a folded polypeptide = ADP + phosphate + an unfolded polypeptide.. Together with its co-chaperonin GroES, plays an essential role in assisting protein folding. The GroEL-GroES system forms a nano-cage that allows encapsulation of the non-native substrate proteins and provides a physical environment optimized to promote and accelerate protein folding. In Desulfosudis oleivorans (strain DSM 6200 / JCM 39069 / Hxd3) (Desulfococcus oleovorans), this protein is Chaperonin GroEL.